A 712-amino-acid chain; its full sequence is Saccharolysin (712 aa).

Serine 73 bears the Phosphoserine mark. Histidine 501 serves as a coordination point for Zn(2+). Glutamate 502 is a catalytic residue. Positions 505 and 508 each coordinate Zn(2+).

Belongs to the peptidase M3 family. Zn(2+) is required as a cofactor.

The protein localises to the cytoplasm. The enzyme catalyses Cleavage of Pro-|-Phe and Ala-|-Ala bonds.. Could be involved in late stage of protein degradation. The protein is Saccharolysin (PRD1) of Saccharomyces cerevisiae (strain ATCC 204508 / S288c) (Baker's yeast).